Consider the following 458-residue polypeptide: Argininosuccinate lyase (458 aa).

It belongs to the lyase 1 family. Argininosuccinate lyase subfamily.

The protein localises to the cytoplasm. It carries out the reaction 2-(N(omega)-L-arginino)succinate = fumarate + L-arginine. It functions in the pathway amino-acid biosynthesis; L-arginine biosynthesis; L-arginine from L-ornithine and carbamoyl phosphate: step 3/3. The sequence is that of Argininosuccinate lyase from Heliobacterium mobile (Heliobacillus mobilis).